Reading from the N-terminus, the 555-residue chain is Glutamine--tRNA ligase (555 aa).

The 'HIGH' region motif lies at 35–45 (PEPNGYLHIGH). Residues 36-38 (EPN) and 42-48 (HIGHAKS) each bind ATP. Residues Asp-68 and Tyr-213 each coordinate L-glutamine. Residues Thr-232 and 262–263 (RL) each bind ATP. The 'KMSKS' region signature appears at 269-273 (ITSKR).

Belongs to the class-I aminoacyl-tRNA synthetase family. As to quaternary structure, monomer.

It localises to the cytoplasm. It catalyses the reaction tRNA(Gln) + L-glutamine + ATP = L-glutaminyl-tRNA(Gln) + AMP + diphosphate. This is Glutamine--tRNA ligase from Ectopseudomonas mendocina (strain ymp) (Pseudomonas mendocina).